The chain runs to 579 residues: Carboxysome shell carbonic anhydrase (579 aa).

The interval 72–95 (GGGRVRSARDQRQPGWVRRDKGAT) is disordered. Residues 78–93 (SARDQRQPGWVRRDKG) show a composition bias toward basic and acidic residues. Cysteine 240 contacts Zn(2+). Aspartate 242 acts as the Proton acceptor in catalysis. Histidine 308 and cysteine 319 together coordinate Zn(2+).

This sequence belongs to the beta-class carbonic anhydrase family. CsoSCA subfamily. Homodimer. Requires Zn(2+) as cofactor.

It localises to the carboxysome. The catalysed reaction is hydrogencarbonate + H(+) = CO2 + H2O. Inhibited by dithiothreitol, partially inhibited by acetatzolamide and cyanide. Its function is as follows. Reversible hydration of carbon dioxide. Essential for photosynthetic carbon dioxide fixation, supplies CO(2) to RuBisCO (ribulose bisphosphate carboxylase, cbbL-cbbS) in the carboxysome. The sequence is that of Carboxysome shell carbonic anhydrase from Parasynechococcus marenigrum (strain WH8102).